We begin with the raw amino-acid sequence, 304 residues long: MTPQLATTICGIALKNPVLAASGTFAYGVEFEKLVDLNALGGFVVKGLSREPIEGNPPPRVFESEAGMINSVGLQNIGVRAFVAEKLPALAGLRTAVFANVFGYCTEDYVEVVRVLNDHAGLAGYELNVSCPNTAHGGIYFSNDPVLLAEVVTAAKRVATRPLIVKLSPNVSAIEPLARVAEESGADALSLVNTVISLAIDARTRRPRIGAGFGGLSGPAIKPIALRFVYQAARAVRIPVIGLGGIATGEDAAEFLIAGASAVEVGTATFWDPRAPLRIAEELGKFLEREGIRKATDLVGTLKF.

Residues serine 22 and lysine 46–glycine 47 contribute to the FMN site. Residues lysine 46 and asparagine 70 to leucine 74 each bind substrate. The FMN site is built by asparagine 100 and asparagine 128. Residue asparagine 128 coordinates substrate. Cysteine 131 acts as the Nucleophile in catalysis. The FMN site is built by lysine 166 and valine 192. Asparagine 193–threonine 194 serves as a coordination point for substrate. Residues glycine 218, glycine 244–glycine 245, and glycine 266–threonine 267 contribute to the FMN site.

Belongs to the dihydroorotate dehydrogenase family. Type 1 subfamily. Homodimer. FMN is required as a cofactor.

Its subcellular location is the cytoplasm. It carries out the reaction (S)-dihydroorotate + fumarate = orotate + succinate. It functions in the pathway pyrimidine metabolism; UMP biosynthesis via de novo pathway. Its function is as follows. Catalyzes the conversion of dihydroorotate to orotate with fumarate as the electron acceptor. The protein is Putative dihydroorotate dehydrogenase A (fumarate) (pyrD) of Solibacter usitatus (strain Ellin6076).